Reading from the N-terminus, the 85-residue chain is Small ribosomal subunit protein bS16 (85 aa).

It belongs to the bacterial ribosomal protein bS16 family.

The chain is Small ribosomal subunit protein bS16 from Clostridium kluyveri (strain NBRC 12016).